A 4910-amino-acid polypeptide reads, in one-letter code: Midasin (4910 aa).

AAA-ATPase protomer stretches follow at residues 305-528 (IQNS…DILF) and 636-975 (MEQI…TDII). Residues 315–322 (GKAGSGKT) and 653–660 (GETGTGKT) contribute to the ATP site. The tract at residues 695-803 (VNSKTVAVPI…KKFEAQSSSI (109 aa)) is interaction with RIX1. Thr-1026 is modified (phosphothreonine). AAA-ATPase protomer stretches follow at residues 1054–1280 (HYII…WALR), 1345–1624 (KGMR…VEFI), 1732–1985 (RVVR…QLLI), and 2036–2286 (VYES…DELH). ATP contacts are provided by residues 1083–1090 (GPTSSGKT), 1368–1375 (GETGCGKT), 1747–1754 (GSPGVGKT), and 2054–2061 (GPSNSGKT). The interval 2372-4075 (EVGKWANNVL…DGEGAQNNNK (1704 aa)) is linker. Ser-2971 carries the phosphoserine modification. Disordered stretches follow at residues 4045 to 4547 (SPQP…EKMD), 4555 to 4574 (SDID…SGFI), and 4579 to 4600 (SEED…EDDS). A compositionally biased stretch (acidic residues) spans 4078–4088 (EQDEDLTEDAQ). Positions 4089 to 4098 (NENKEQQDKD) are enriched in basic and acidic residues. The span at 4099–4154 (ERDDENEDDAVEMEGDMAGELEDLSNGEENDDEDTDSEEEELDEEIDDLNEDDPNA) shows a compositional bias: acidic residues. Over residues 4155 to 4174 (IDDKMWDDKASDNSKEKDTD) the composition is skewed to basic and acidic residues. Composition is skewed to acidic residues over residues 4202 to 4244 (GDED…EDLE), 4251 to 4274 (ETLD…DVDM), and 4288 to 4358 (GNED…EEEL). Ser-4353 carries the phosphoserine modification. The segment covering 4359–4372 (KQDAAMEENKEKGG) has biased composition (basic and acidic residues). Thr-4388 carries the phosphothreonine modification. 2 stretches are compositionally biased toward basic and acidic residues: residues 4435–4447 (DVTK…REEA) and 4481–4495 (LEKN…EHVE). Residues 4498–4516 (NTETDTQALGSATQDQLQT) show a composition bias toward polar residues. The span at 4517–4531 (IDEDMAIDDDREEQE) shows a compositional bias: acidic residues. Ser-4555 is subject to Phosphoserine. Over residues 4557–4570 (IDAHDANNDVDSKK) the composition is skewed to basic and acidic residues. The VWFA domain occupies 4704–4899 (QIMIALDDSK…SELPEMLSLI (196 aa)).

It belongs to the midasin family. Associates with pre-60S ribosomes in the nucleoplasm. Interacts (via its hexameric AAA ATPase ring) with the RIX1 complex (via RIX1); this interaction is crucial for recruitment of MDN1 to the pre-ribosomal particle. Interacts (via VWFA/MIDAS domain) with YTM1 (via UBL domain). Interacts (via VWFA/MIDAS domain) with RSA4 (via UBL domain).

It is found in the nucleus. The protein localises to the nucleolus. The protein resides in the nucleoplasm. Its function is as follows. Nuclear chaperone required for maturation and nuclear export of pre-60S ribosome subunits. Functions at successive maturation steps to remove ribosomal factors at critical transition points, first driving the exit of early pre-60S particles from the nucleolus and then driving late pre-60S particles from the nucleus. At an early stage in 60S maturation, mediates the dissociation of the NOP7 complex (YTM1-ERB1-NOP7) from early pre-60S particles, rendering them competent for export from the nucleolus to the nucleoplasm. Subsequently recruited to the nucleoplasmic particles through interaction with the RIX1 complex. This binding is only possible if the 5S RNP at the central protuberance has undergone the rotation to complete its maturation. After remodeling, removes the ribosome biogenesis factor RSA4 in an ATP hydrolysis-driven step from pre-60S ribosomal subunits, rendering them competent for export from the nucleoplasm to the cytoplasm. Activates the GTPase activity of NOG2, which disengages from the pre-60S particle upon GTP hydrolysis, thus freeing its binding site for the nuclear export factor NMD3. This chain is Midasin (MDN1), found in Saccharomyces cerevisiae (strain ATCC 204508 / S288c) (Baker's yeast).